Reading from the N-terminus, the 818-residue chain is Probable beta-glucosidase I (818 aa).

Residue N176 is glycosylated (N-linked (GlcNAc...) asparagine). D204 is an active-site residue. The PA14 domain occupies 374–534 (DGKPGFTFRV…SQEELISNAV (161 aa)). 2 N-linked (GlcNAc...) asparagine glycosylation sites follow: N453 and N472.

Belongs to the glycosyl hydrolase 3 family.

Its subcellular location is the secreted. It carries out the reaction Hydrolysis of terminal, non-reducing beta-D-glucosyl residues with release of beta-D-glucose.. It functions in the pathway glycan metabolism; cellulose degradation. Its function is as follows. Beta-glucosidases are one of a number of cellulolytic enzymes involved in the degradation of cellulosic biomass. Catalyzes the last step releasing glucose from the inhibitory cellobiose. In Aspergillus niger (strain ATCC MYA-4892 / CBS 513.88 / FGSC A1513), this protein is Probable beta-glucosidase I (bglI).